Reading from the N-terminus, the 291-residue chain is Phosphatidylglycerol--prolipoprotein diacylglyceryl transferase (291 aa).

The next 7 membrane-spanning stretches (helical) occupy residues V21–A41, L60–Y80, W96–F116, F130–G150, S198–I218, G225–F245, and I260–W280. An a 1,2-diacyl-sn-glycero-3-phospho-(1'-sn-glycerol)-binding site is contributed by R143.

The protein belongs to the Lgt family.

It localises to the cell inner membrane. It catalyses the reaction L-cysteinyl-[prolipoprotein] + a 1,2-diacyl-sn-glycero-3-phospho-(1'-sn-glycerol) = an S-1,2-diacyl-sn-glyceryl-L-cysteinyl-[prolipoprotein] + sn-glycerol 1-phosphate + H(+). It participates in protein modification; lipoprotein biosynthesis (diacylglyceryl transfer). Its function is as follows. Catalyzes the transfer of the diacylglyceryl group from phosphatidylglycerol to the sulfhydryl group of the N-terminal cysteine of a prolipoprotein, the first step in the formation of mature lipoproteins. This is Phosphatidylglycerol--prolipoprotein diacylglyceryl transferase from Salmonella choleraesuis (strain SC-B67).